A 426-amino-acid chain; its full sequence is Adenylosuccinate synthetase (426 aa).

GTP is bound by residues 12-18 (GDEGKGK) and 40-42 (GHT). The active-site Proton acceptor is the D13. Mg(2+) is bound by residues D13 and G40. IMP contacts are provided by residues 13 to 16 (DEGK), 38 to 41 (NAGH), T131, R145, Q226, T241, and R305. H41 functions as the Proton donor in the catalytic mechanism. Residue 301–307 (ATTGRKR) participates in substrate binding. GTP-binding positions include R307, 333–335 (KLD), and 415–417 (SVG).

The protein belongs to the adenylosuccinate synthetase family. In terms of assembly, homodimer. Requires Mg(2+) as cofactor.

It is found in the cytoplasm. It catalyses the reaction IMP + L-aspartate + GTP = N(6)-(1,2-dicarboxyethyl)-AMP + GDP + phosphate + 2 H(+). It functions in the pathway purine metabolism; AMP biosynthesis via de novo pathway; AMP from IMP: step 1/2. In terms of biological role, plays an important role in the de novo pathway of purine nucleotide biosynthesis. Catalyzes the first committed step in the biosynthesis of AMP from IMP. The polypeptide is Adenylosuccinate synthetase (Nitratidesulfovibrio vulgaris (strain DP4) (Desulfovibrio vulgaris)).